A 187-amino-acid chain; its full sequence is Oligoribonuclease (187 aa).

The region spanning 7-170 (LIWIDLEMTG…DDIKDSINEL (164 aa)) is the Exonuclease domain. Y128 is an active-site residue.

The protein belongs to the oligoribonuclease family.

The protein localises to the cytoplasm. Functionally, 3'-to-5' exoribonuclease specific for small oligoribonucleotides. The sequence is that of Oligoribonuclease from Legionella pneumophila (strain Paris).